The sequence spans 63 residues: Cytochrome c oxidase subunit 7C, mitochondrial (63 aa).

The N-terminal 16 residues, 1–16, are a transit peptide targeting the mitochondrion; sequence MLGQSIRRFTTSVVRR. Topologically, residues 17–33 are mitochondrial matrix; sequence SHYEEGPGKNLPFSVEN. Residue K25 is modified to N6-acetyllysine; alternate. K25 carries the N6-succinyllysine; alternate modification. Residues 34–60 form a helical membrane-spanning segment; it reads KWRLLLMMTVYFGSGFAAPFFIVRHQL. Over 61–63 the chain is Mitochondrial intermembrane; it reads LKK.

It belongs to the cytochrome c oxidase VIIc family. In terms of assembly, component of the cytochrome c oxidase (complex IV, CIV), a multisubunit enzyme composed of 14 subunits. The complex is composed of a catalytic core of 3 subunits MT-CO1, MT-CO2 and MT-CO3, encoded in the mitochondrial DNA, and 11 supernumerary subunits COX4I, COX5A, COX5B, COX6A, COX6B, COX6C, COX7A, COX7B, COX7C, COX8 and NDUFA4, which are encoded in the nuclear genome. The complex exists as a monomer or a dimer and forms supercomplexes (SCs) in the inner mitochondrial membrane with NADH-ubiquinone oxidoreductase (complex I, CI) and ubiquinol-cytochrome c oxidoreductase (cytochrome b-c1 complex, complex III, CIII), resulting in different assemblies (supercomplex SCI(1)III(2)IV(1) and megacomplex MCI(2)III(2)IV(2)). Interacts with RAB5IF.

The protein localises to the mitochondrion inner membrane. It functions in the pathway energy metabolism; oxidative phosphorylation. In terms of biological role, component of the cytochrome c oxidase, the last enzyme in the mitochondrial electron transport chain which drives oxidative phosphorylation. The respiratory chain contains 3 multisubunit complexes succinate dehydrogenase (complex II, CII), ubiquinol-cytochrome c oxidoreductase (cytochrome b-c1 complex, complex III, CIII) and cytochrome c oxidase (complex IV, CIV), that cooperate to transfer electrons derived from NADH and succinate to molecular oxygen, creating an electrochemical gradient over the inner membrane that drives transmembrane transport and the ATP synthase. Cytochrome c oxidase is the component of the respiratory chain that catalyzes the reduction of oxygen to water. Electrons originating from reduced cytochrome c in the intermembrane space (IMS) are transferred via the dinuclear copper A center (CU(A)) of subunit 2 and heme A of subunit 1 to the active site in subunit 1, a binuclear center (BNC) formed by heme A3 and copper B (CU(B)). The BNC reduces molecular oxygen to 2 water molecules using 4 electrons from cytochrome c in the IMS and 4 protons from the mitochondrial matrix. The sequence is that of Cytochrome c oxidase subunit 7C, mitochondrial (Cox7c) from Rattus norvegicus (Rat).